The primary structure comprises 488 residues: Protein unzipped (488 aa).

The first 21 residues, 1–21 (MTSNSCLISLGLLLVLIQILA), serve as a signal peptide directing secretion. Over 22 to 465 (PAKAAEHSVF…DVALAGFGVN (444 aa)) the chain is Extracellular. N-linked (GlcNAc...) asparagine glycans are attached at residues asparagine 35, asparagine 232, asparagine 317, and asparagine 374. Residues 380-400 (TTTTTTTTSTSTTTHATTTST) show a composition bias toward low complexity. Residues 380–453 (TTTTTTTTST…EAPENMSSDP (74 aa)) form a disordered region. Asparagine 448 is a glycosylation site (N-linked (GlcNAc...) asparagine). A helical membrane pass occupies residues 466-486 (AAGSTFIAGSALLTLLLTIFL). Topologically, residues 487–488 (SL) are cytoplasmic.

It is found in the membrane. Required for normal axon patterning during neurogenesis. The polypeptide is Protein unzipped (uzip) (Drosophila melanogaster (Fruit fly)).